The primary structure comprises 340 residues: Dihydroorotate dehydrogenase (quinone) (340 aa).

Residues 67-71 (AGFDK) and Thr91 contribute to the FMN site. Lys71 contributes to the substrate binding site. 116–120 (NRMGF) is a binding site for substrate. Positions 143 and 176 each coordinate FMN. Asn176 provides a ligand contact to substrate. Ser179 serves as the catalytic Nucleophile. Asn181 contributes to the substrate binding site. Residues Lys217 and Thr245 each coordinate FMN. 246 to 247 (NT) contacts substrate. Residues Gly267, Gly296, and 317-318 (YT) contribute to the FMN site.

Belongs to the dihydroorotate dehydrogenase family. Type 2 subfamily. In terms of assembly, monomer. FMN is required as a cofactor.

It localises to the cell membrane. The enzyme catalyses (S)-dihydroorotate + a quinone = orotate + a quinol. The protein operates within pyrimidine metabolism; UMP biosynthesis via de novo pathway; orotate from (S)-dihydroorotate (quinone route): step 1/1. Functionally, catalyzes the conversion of dihydroorotate to orotate with quinone as electron acceptor. This chain is Dihydroorotate dehydrogenase (quinone), found in Christiangramia forsetii (strain DSM 17595 / CGMCC 1.15422 / KT0803) (Gramella forsetii).